The following is a 545-amino-acid chain: Luciferin 4-monooxygenase (545 aa).

The Microbody targeting signal motif lies at 543 to 545 (SKL).

It belongs to the ATP-dependent AMP-binding enzyme family. Requires Mg(2+) as cofactor.

It is found in the peroxisome. The catalysed reaction is firefly D-luciferin + ATP + O2 = firefly oxyluciferin + hnu + AMP + CO2 + diphosphate. Produces green light with a wavelength of 562 nm. The polypeptide is Luciferin 4-monooxygenase (Photuris pensylvanica (Pennsylania firefly)).